We begin with the raw amino-acid sequence, 360 residues long: UDP-N-acetylglucosamine--N-acetylmuramyl-(pentapeptide) pyrophosphoryl-undecaprenol N-acetylglucosamine transferase (360 aa).

UDP-N-acetyl-alpha-D-glucosamine-binding positions include 15–17 (TGG), Asn-127, Arg-163, Ser-191, Ile-249, 268–273 (ALTVSE), and Gln-293.

The protein belongs to the glycosyltransferase 28 family. MurG subfamily.

Its subcellular location is the cell inner membrane. The enzyme catalyses di-trans,octa-cis-undecaprenyl diphospho-N-acetyl-alpha-D-muramoyl-L-alanyl-D-glutamyl-meso-2,6-diaminopimeloyl-D-alanyl-D-alanine + UDP-N-acetyl-alpha-D-glucosamine = di-trans,octa-cis-undecaprenyl diphospho-[N-acetyl-alpha-D-glucosaminyl-(1-&gt;4)]-N-acetyl-alpha-D-muramoyl-L-alanyl-D-glutamyl-meso-2,6-diaminopimeloyl-D-alanyl-D-alanine + UDP + H(+). The protein operates within cell wall biogenesis; peptidoglycan biosynthesis. In terms of biological role, cell wall formation. Catalyzes the transfer of a GlcNAc subunit on undecaprenyl-pyrophosphoryl-MurNAc-pentapeptide (lipid intermediate I) to form undecaprenyl-pyrophosphoryl-MurNAc-(pentapeptide)GlcNAc (lipid intermediate II). This Proteus mirabilis (strain HI4320) protein is UDP-N-acetylglucosamine--N-acetylmuramyl-(pentapeptide) pyrophosphoryl-undecaprenol N-acetylglucosamine transferase.